Here is a 457-residue protein sequence, read N- to C-terminus: Serine--tRNA ligase (457 aa).

Position 252 to 254 (T252 to E254) interacts with L-serine. Residues R283 to E285 and V299 contribute to the ATP site. Position 306 (E306) interacts with L-serine. Residue E370 to S373 participates in ATP binding. T406 provides a ligand contact to L-serine.

The protein belongs to the class-II aminoacyl-tRNA synthetase family. Type-1 seryl-tRNA synthetase subfamily. As to quaternary structure, homodimer. The tRNA molecule binds across the dimer.

The protein resides in the cytoplasm. The catalysed reaction is tRNA(Ser) + L-serine + ATP = L-seryl-tRNA(Ser) + AMP + diphosphate + H(+). The enzyme catalyses tRNA(Sec) + L-serine + ATP = L-seryl-tRNA(Sec) + AMP + diphosphate + H(+). Its pathway is aminoacyl-tRNA biosynthesis; selenocysteinyl-tRNA(Sec) biosynthesis; L-seryl-tRNA(Sec) from L-serine and tRNA(Sec): step 1/1. Catalyzes the attachment of serine to tRNA(Ser). Is also able to aminoacylate tRNA(Sec) with serine, to form the misacylated tRNA L-seryl-tRNA(Sec), which will be further converted into selenocysteinyl-tRNA(Sec). In Saccharolobus islandicus (strain M.14.25 / Kamchatka #1) (Sulfolobus islandicus), this protein is Serine--tRNA ligase.